Reading from the N-terminus, the 554-residue chain is MTKFVFVTGGVVSSLGKGIASASLAAILESRGLKVTLIKLDPYINVDPGTMSPFQHGEVFVTDDGAETDLDLGHYERFIETRMNRANNFTTGKIYQSVLEKERRGDYLGKTVQVIPHVTNEIQEFIQRGAGMGTPVAVDVAIVEIGGTVGDIESLPFLEAVRQMSLRMGANNSTFVHLTYLPWIATAGELKTKPTQHTVQKLREIGIQADALLCRADRRIPGEERAKISLFTNVPEWGVISMWDVDIIYKVPRMLHEQGLDGLICDKLRLNTRPTNLQRWDDLVYATEHPQGAVTVAMVGKYVDLSDSYKSVNEALRHAGMRNHVRVQIDHVDSETIDSADAAARLARYDAILVPGGFGQRGVEGKIATARYAREHKLPYLGICLGMQVATIEYARHVAGLANANSTEFDPATPHPVIALITEWQDADGSIQQRDQDSNLGGTMRLGAQSSDVLAGTLAHRIYGDVVTERHRHRYEANVNYLEPLRKAGLVIAALTQREQLTEIVELPQSMHPWFIGVQFHPEFKSTPWNGHPLFNSFIAAAKARHQARHEGPA.

Residues 1-270 are amidoligase domain; it reads MTKFVFVTGG…DGLICDKLRL (270 aa). A CTP-binding site is contributed by Ser-13. Ser-13 provides a ligand contact to UTP. Residues 14–19 and Asp-71 each bind ATP; that span reads SLGKGI. Mg(2+) is bound by residues Asp-71 and Glu-144. Residues 151 to 153, 191 to 196, and Lys-227 contribute to the CTP site; these read DIE and KTKPTQ. UTP contacts are provided by residues 191-196 and Lys-227; that span reads KTKPTQ. Residues 295–548 form the Glutamine amidotransferase type-1 domain; sequence TVAMVGKYVD…IAAAKARHQA (254 aa). Gly-357 contacts L-glutamine. Cys-384 serves as the catalytic Nucleophile; for glutamine hydrolysis. L-glutamine contacts are provided by residues 385–388, Glu-408, and Arg-474; that span reads LGMQ. Residues His-521 and Glu-523 contribute to the active site.

The protein belongs to the CTP synthase family. Homotetramer.

It carries out the reaction UTP + L-glutamine + ATP + H2O = CTP + L-glutamate + ADP + phosphate + 2 H(+). It catalyses the reaction L-glutamine + H2O = L-glutamate + NH4(+). The enzyme catalyses UTP + NH4(+) + ATP = CTP + ADP + phosphate + 2 H(+). The protein operates within pyrimidine metabolism; CTP biosynthesis via de novo pathway; CTP from UDP: step 2/2. With respect to regulation, allosterically activated by GTP, when glutamine is the substrate; GTP has no effect on the reaction when ammonia is the substrate. The allosteric effector GTP functions by stabilizing the protein conformation that binds the tetrahedral intermediate(s) formed during glutamine hydrolysis. Inhibited by the product CTP, via allosteric rather than competitive inhibition. Functionally, catalyzes the ATP-dependent amination of UTP to CTP with either L-glutamine or ammonia as the source of nitrogen. Regulates intracellular CTP levels through interactions with the four ribonucleotide triphosphates. This is CTP synthase from Verminephrobacter eiseniae (strain EF01-2).